A 338-amino-acid chain; its full sequence is tRNA N6-adenosine threonylcarbamoyltransferase (338 aa).

His110 and His114 together coordinate Fe cation. Residues 132 to 136, Asp165, Gly178, and Asn274 contribute to the substrate site; that span reads VLSGG. A Fe cation-binding site is contributed by Asp298.

It belongs to the KAE1 / TsaD family. The cofactor is Fe(2+).

It localises to the cytoplasm. It catalyses the reaction L-threonylcarbamoyladenylate + adenosine(37) in tRNA = N(6)-L-threonylcarbamoyladenosine(37) in tRNA + AMP + H(+). Functionally, required for the formation of a threonylcarbamoyl group on adenosine at position 37 (t(6)A37) in tRNAs that read codons beginning with adenine. Is involved in the transfer of the threonylcarbamoyl moiety of threonylcarbamoyl-AMP (TC-AMP) to the N6 group of A37, together with TsaE and TsaB. TsaD likely plays a direct catalytic role in this reaction. The chain is tRNA N6-adenosine threonylcarbamoyltransferase from Borrelia duttonii (strain Ly).